A 330-amino-acid chain; its full sequence is Fructose-1,6-bisphosphatase class 1 (330 aa).

Residues Glu-84, Asp-103, Leu-105, and Asp-106 each contribute to the Mg(2+) site. Substrate contacts are provided by residues 106–109 (DGSS), Asn-196, and Lys-262. Residue Glu-268 coordinates Mg(2+).

This sequence belongs to the FBPase class 1 family. In terms of assembly, homotetramer. It depends on Mg(2+) as a cofactor.

It is found in the cytoplasm. The enzyme catalyses beta-D-fructose 1,6-bisphosphate + H2O = beta-D-fructose 6-phosphate + phosphate. Its pathway is carbohydrate biosynthesis; gluconeogenesis. The chain is Fructose-1,6-bisphosphatase class 1 from Shewanella sp. (strain W3-18-1).